Consider the following 520-residue polypeptide: Basal body-orientation factor 1 (520 aa).

The span at Met1–Asp21 shows a compositional bias: basic residues. Residues Met1–Ile34 form a disordered region. The span at Gly22–Ile34 shows a compositional bias: basic and acidic residues. Coiled coils occupy residues Lys27–Met175 and Val245–Ala386. Positions Ala468 to Glu492 are disordered. The span at His469–Ser478 shows a compositional bias: low complexity. Residues Glu479 to Glu492 are compositionally biased toward polar residues.

This sequence belongs to the BBOF1 family.

It localises to the cytoplasm. Its subcellular location is the cytoskeleton. The protein localises to the cilium basal body. In terms of biological role, basal body protein required in multiciliate cells to align and maintain cilia orientation in response to flow. May act by mediating a maturation step that stabilizes and aligns cilia orientation. Not required to respond to planar cell polarity (PCP) or flow-based orientation cues. The polypeptide is Basal body-orientation factor 1 (Danio rerio (Zebrafish)).